Consider the following 406-residue polypeptide: Imidazolonepropionase (406 aa).

Fe(3+) is bound by residues His65 and His67. Residues His65 and His67 each contribute to the Zn(2+) site. Residues Arg74, Tyr137, and His170 each contribute to the 4-imidazolone-5-propanoate site. Tyr137 serves as a coordination point for N-formimidoyl-L-glutamate. His235 provides a ligand contact to Fe(3+). His235 serves as a coordination point for Zn(2+). Position 238 (Gln238) interacts with 4-imidazolone-5-propanoate. Residue Asp310 coordinates Fe(3+). A Zn(2+)-binding site is contributed by Asp310. The N-formimidoyl-L-glutamate site is built by Asn312 and Gly314. Thr315 serves as a coordination point for 4-imidazolone-5-propanoate.

The protein belongs to the metallo-dependent hydrolases superfamily. HutI family. It depends on Zn(2+) as a cofactor. Fe(3+) serves as cofactor.

The protein resides in the cytoplasm. It catalyses the reaction 4-imidazolone-5-propanoate + H2O = N-formimidoyl-L-glutamate. Its pathway is amino-acid degradation; L-histidine degradation into L-glutamate; N-formimidoyl-L-glutamate from L-histidine: step 3/3. Functionally, catalyzes the hydrolytic cleavage of the carbon-nitrogen bond in imidazolone-5-propanoate to yield N-formimidoyl-L-glutamate. It is the third step in the universal histidine degradation pathway. This Vibrio vulnificus (strain YJ016) protein is Imidazolonepropionase.